A 307-amino-acid polypeptide reads, in one-letter code: Aspartate carbamoyltransferase catalytic subunit (307 aa).

Carbamoyl phosphate is bound by residues arginine 59 and threonine 60. Lysine 87 lines the L-aspartate pocket. Positions 109, 137, and 140 each coordinate carbamoyl phosphate. L-aspartate contacts are provided by arginine 173 and arginine 223. Glycine 266 and proline 267 together coordinate carbamoyl phosphate.

It belongs to the aspartate/ornithine carbamoyltransferase superfamily. ATCase family. In terms of assembly, heterododecamer (2C3:3R2) of six catalytic PyrB chains organized as two trimers (C3), and six regulatory PyrI chains organized as three dimers (R2).

The catalysed reaction is carbamoyl phosphate + L-aspartate = N-carbamoyl-L-aspartate + phosphate + H(+). It participates in pyrimidine metabolism; UMP biosynthesis via de novo pathway; (S)-dihydroorotate from bicarbonate: step 2/3. In terms of biological role, catalyzes the condensation of carbamoyl phosphate and aspartate to form carbamoyl aspartate and inorganic phosphate, the committed step in the de novo pyrimidine nucleotide biosynthesis pathway. The chain is Aspartate carbamoyltransferase catalytic subunit from Helicobacter pylori (strain ATCC 700392 / 26695) (Campylobacter pylori).